The chain runs to 213 residues: Probable septum site-determining protein MinC (213 aa).

It belongs to the MinC family. In terms of assembly, interacts with MinD and FtsZ.

Functionally, cell division inhibitor that blocks the formation of polar Z ring septums. Rapidly oscillates between the poles of the cell to destabilize FtsZ filaments that have formed before they mature into polar Z rings. Prevents FtsZ polymerization. The protein is Probable septum site-determining protein MinC of Clostridium botulinum (strain Eklund 17B / Type B).